The primary structure comprises 157 residues: Protein GrpE (157 aa).

The span at 1–10 (MQEENQHPEQ) shows a compositional bias: basic and acidic residues. The segment at 1 to 21 (MQEENQHPEQDDISEAQDAGA) is disordered.

Belongs to the GrpE family. In terms of assembly, homodimer.

Its subcellular location is the cytoplasm. Its function is as follows. Participates actively in the response to hyperosmotic and heat shock by preventing the aggregation of stress-denatured proteins, in association with DnaK and GrpE. It is the nucleotide exchange factor for DnaK and may function as a thermosensor. Unfolded proteins bind initially to DnaJ; upon interaction with the DnaJ-bound protein, DnaK hydrolyzes its bound ATP, resulting in the formation of a stable complex. GrpE releases ADP from DnaK; ATP binding to DnaK triggers the release of the substrate protein, thus completing the reaction cycle. Several rounds of ATP-dependent interactions between DnaJ, DnaK and GrpE are required for fully efficient folding. In Methylovorus sp. (strain SS1 / DSM 11726), this protein is Protein GrpE.